A 337-amino-acid polypeptide reads, in one-letter code: Palmitoyltransferase ZDHHC15 (337 aa).

Residues 1 to 20 lie on the Cytoplasmic side of the membrane; sequence MRRGWKMALSGGLRCCRRVL. The helical transmembrane segment at 21-41 threads the bilayer; the sequence is SWVPVLVIVLVVLWSYYAYVF. Topologically, residues 42-56 are lumenal; the sequence is ELCLVTVLSPAEKVI. Residues 57-77 form a helical membrane-spanning segment; the sequence is YLILYHAIFVFFAWTYWKSIF. The Cytoplasmic segment spans residues 78–172; that stretch reads TLPQQPNQKF…NNCIGFSNYK (95 aa). A DHHC domain is found at 129 to 179; it reads RFCDRCHLIKPDRCHHCSVCAMCVLKMDHHCPWVNNCIGFSNYKFFLQFLA. Residues C131, C134, H144, C145, C148, C151, and H158 each coordinate Zn(2+). Residue C159 is the S-palmitoyl cysteine intermediate of the active site. C165 contributes to the Zn(2+) binding site. The helical transmembrane segment at 173-193 threads the bilayer; it reads FFLQFLAYSVLYCLYIATTVF. At 194 to 210 the chain is on the lumenal side; it reads SYFIKYWRGELPSVRSK. The chain crosses the membrane as a helical span at residues 211–234; sequence FHVLFLLFVACMFFVSLVILFGYH. At 235–337 the chain is on the cytoplasmic side; it reads CWLVSRNKTT…LSSLAVESET (103 aa). The disordered stretch occupies residues 293 to 337; sequence HSFPMRSMNESQNPLLANEEPWEDNEDESQDYPEGLSSLAVESET. The span at 312-323 shows a compositional bias: acidic residues; sequence EPWEDNEDESQD.

The protein belongs to the DHHC palmitoyltransferase family. In terms of processing, autopalmitoylated (in vitro). In terms of tissue distribution, in brain, expressed in both excitatory and inhibitory neurons but not expressed by glial cells.

The protein resides in the golgi apparatus membrane. The protein localises to the postsynaptic density. The catalysed reaction is L-cysteinyl-[protein] + hexadecanoyl-CoA = S-hexadecanoyl-L-cysteinyl-[protein] + CoA. The enzyme catalyses L-cysteinyl-[protein] + tetradecanoyl-CoA = S-tetradecanoyl-L-cysteinyl-[protein] + CoA. It carries out the reaction L-cysteinyl-[protein] + octadecanoyl-CoA = S-octadecanoyl-L-cysteinyl-[protein] + CoA. Functionally, palmitoyltransferase that catalyzes the addition of palmitate onto various protein substrates. Has no stringent fatty acid selectivity and in addition to palmitate can also transfer onto target proteins myristate from tetradecanoyl-CoA and stearate from octadecanoyl-CoA. Palmitoylates IGF2R and SORT1, promoting their partitioning to an endosomal membrane subdomain where they can interact with the retromer cargo-selective complex. Thereby, regulates retrograde transport from endosomes to the Golgi apparatus of these lysosomal sorting receptors and plays a role in trafficking of lysosomal proteins. In the nervous system, catalyzes the palmitoylation of DLG4/PSD95 and regulates its synaptic clustering and function in synaptogenesis. Could be involved in the differentiation of dopaminergic neurons and the development of the diencephalon. Could also catalyze the palmitoylation of GAP43. Could also palmitoylate DNAJC5 and regulate its localization to the Golgi membrane. Could also palmitoylate FYN as shown in vitro. May palmitoylate CALHM3 subunit of gustatory voltage-gated ion channels and modulate channel gating and kinetics. The chain is Palmitoyltransferase ZDHHC15 from Rattus norvegicus (Rat).